Here is a 253-residue protein sequence, read N- to C-terminus: tRNA pseudouridine synthase A (253 aa).

D53 acts as the Nucleophile in catalysis. Y111 provides a ligand contact to substrate.

It belongs to the tRNA pseudouridine synthase TruA family. As to quaternary structure, homodimer.

The catalysed reaction is uridine(38/39/40) in tRNA = pseudouridine(38/39/40) in tRNA. Formation of pseudouridine at positions 38, 39 and 40 in the anticodon stem and loop of transfer RNAs. The sequence is that of tRNA pseudouridine synthase A from Chlorobium luteolum (strain DSM 273 / BCRC 81028 / 2530) (Pelodictyon luteolum).